Here is a 345-residue protein sequence, read N- to C-terminus: Dihydroorotase (345 aa).

Residues H13 and H15 each coordinate Zn(2+). Substrate contacts are provided by residues 15–17 (HLR) and N41. Positions 99, 136, and 174 each coordinate Zn(2+). Residue K99 is modified to N6-carboxylysine. Residue H136 coordinates substrate. L219 lines the substrate pocket. Position 247 (D247) interacts with Zn(2+). The active site involves D247. Substrate contacts are provided by H251 and A263.

Belongs to the metallo-dependent hydrolases superfamily. DHOase family. Class II DHOase subfamily. As to quaternary structure, homodimer. Zn(2+) serves as cofactor.

It catalyses the reaction (S)-dihydroorotate + H2O = N-carbamoyl-L-aspartate + H(+). Its pathway is pyrimidine metabolism; UMP biosynthesis via de novo pathway; (S)-dihydroorotate from bicarbonate: step 3/3. Catalyzes the reversible cyclization of carbamoyl aspartate to dihydroorotate. The chain is Dihydroorotase from Hahella chejuensis (strain KCTC 2396).